Here is a 565-residue protein sequence, read N- to C-terminus: Dihydroxy-acid dehydratase (565 aa).

Cysteine 53 contributes to the [2Fe-2S] cluster binding site. Position 85 (aspartate 85) interacts with Mg(2+). Cysteine 126 contributes to the [2Fe-2S] cluster binding site. Mg(2+)-binding residues include aspartate 127 and lysine 128. Lysine 128 is modified (N6-carboxylysine). [2Fe-2S] cluster is bound at residue cysteine 198. Glutamate 450 serves as a coordination point for Mg(2+). The Proton acceptor role is filled by serine 476.

The protein belongs to the IlvD/Edd family. In terms of assembly, homodimer. [2Fe-2S] cluster serves as cofactor. The cofactor is Mg(2+).

The enzyme catalyses (2R)-2,3-dihydroxy-3-methylbutanoate = 3-methyl-2-oxobutanoate + H2O. It catalyses the reaction (2R,3R)-2,3-dihydroxy-3-methylpentanoate = (S)-3-methyl-2-oxopentanoate + H2O. It functions in the pathway amino-acid biosynthesis; L-isoleucine biosynthesis; L-isoleucine from 2-oxobutanoate: step 3/4. Its pathway is amino-acid biosynthesis; L-valine biosynthesis; L-valine from pyruvate: step 3/4. In terms of biological role, functions in the biosynthesis of branched-chain amino acids. Catalyzes the dehydration of (2R,3R)-2,3-dihydroxy-3-methylpentanoate (2,3-dihydroxy-3-methylvalerate) into 2-oxo-3-methylpentanoate (2-oxo-3-methylvalerate) and of (2R)-2,3-dihydroxy-3-methylbutanoate (2,3-dihydroxyisovalerate) into 2-oxo-3-methylbutanoate (2-oxoisovalerate), the penultimate precursor to L-isoleucine and L-valine, respectively. In Synechococcus sp. (strain JA-2-3B'a(2-13)) (Cyanobacteria bacterium Yellowstone B-Prime), this protein is Dihydroxy-acid dehydratase.